We begin with the raw amino-acid sequence, 546 residues long: CTP synthase (546 aa).

The segment at 1–266 (MTTRYIFVTG…DELVVKRFSL (266 aa)) is amidoligase domain. S14 serves as a coordination point for CTP. S14 lines the UTP pocket. Residues 15–20 (SLGKGI) and D72 contribute to the ATP site. Mg(2+) is bound by residues D72 and E140. Residues 147–149 (DIE), 187–192 (KTKPTQ), and K223 contribute to the CTP site. UTP contacts are provided by residues 187–192 (KTKPTQ) and K223. 239-241 (KDV) contributes to the ATP binding site. In terms of domain architecture, Glutamine amidotransferase type-1 spans 291-542 (VIGMVGKYIE…VAAASAHQKR (252 aa)). Residue G352 participates in L-glutamine binding. The active-site Nucleophile; for glutamine hydrolysis is C379. L-glutamine-binding positions include 380-383 (LGMQ), E403, and R470. Active-site residues include H515 and E517.

This sequence belongs to the CTP synthase family. Homotetramer.

It catalyses the reaction UTP + L-glutamine + ATP + H2O = CTP + L-glutamate + ADP + phosphate + 2 H(+). It carries out the reaction L-glutamine + H2O = L-glutamate + NH4(+). The enzyme catalyses UTP + NH4(+) + ATP = CTP + ADP + phosphate + 2 H(+). Its pathway is pyrimidine metabolism; CTP biosynthesis via de novo pathway; CTP from UDP: step 2/2. With respect to regulation, allosterically activated by GTP, when glutamine is the substrate; GTP has no effect on the reaction when ammonia is the substrate. The allosteric effector GTP functions by stabilizing the protein conformation that binds the tetrahedral intermediate(s) formed during glutamine hydrolysis. Inhibited by the product CTP, via allosteric rather than competitive inhibition. Functionally, catalyzes the ATP-dependent amination of UTP to CTP with either L-glutamine or ammonia as the source of nitrogen. Regulates intracellular CTP levels through interactions with the four ribonucleotide triphosphates. This chain is CTP synthase, found in Shewanella oneidensis (strain ATCC 700550 / JCM 31522 / CIP 106686 / LMG 19005 / NCIMB 14063 / MR-1).